The primary structure comprises 236 residues: Small ribosomal subunit protein uS3 (236 aa).

The KH type-2 domain occupies 39–107; the sequence is VREFLKKKLA…PVHLNIEEVR (69 aa). The interval 215–236 is disordered; that stretch reads AAQPAEPEKKVRKSGAKNAATS.

This sequence belongs to the universal ribosomal protein uS3 family. As to quaternary structure, part of the 30S ribosomal subunit. Forms a tight complex with proteins S10 and S14.

In terms of biological role, binds the lower part of the 30S subunit head. Binds mRNA in the 70S ribosome, positioning it for translation. In Methylobacillus flagellatus (strain ATCC 51484 / DSM 6875 / VKM B-1610 / KT), this protein is Small ribosomal subunit protein uS3.